The chain runs to 320 residues: 3'-5' exoribonuclease YhaM (320 aa).

Residues 18 to 90 (FLIKSATKAV…QLKIGSIRPT (73 aa)) constitute a DNA-binding region (OB). The HD domain maps to 163 to 279 (HVVCMLNVAK…LHMIDNIDAK (117 aa)).

This sequence belongs to the YhaM family.

Its function is as follows. Shows a 3'-5' exoribonuclease activity. This Halalkalibacterium halodurans (strain ATCC BAA-125 / DSM 18197 / FERM 7344 / JCM 9153 / C-125) (Bacillus halodurans) protein is 3'-5' exoribonuclease YhaM.